The primary structure comprises 400 residues: MSRNITIEMLNQIPVQDQQIELVERKCLGHPDSIADGIAEAVSRALCNTYIDQFGGVLHHNTDQGEIVAGESMPKFGGGKIIKPIFVLLDGRATKEFNGEKIAADTVALKAAKDYLRTILPELNLDQHLIMDCRLGTGSTDLRDVFKPEAGQIPRANDTSFGVSYAPFSDIEKCIREISSYIDTTLRPKYPVYGTDIKIMGLRQGNTIKLTICCAMVDRYVSSLSDYVNYREKLAEEALKVAKTCTDKKVEVSVNTADCDIECSLFLTVTGTSAEMGDDGSVGRGNRANGLITPHRPMSMEATSGKNPINHIGKIYNLLSNELAHTCVEKVDGIAEIQVRLLSQIGSPIDQPLVASAQIIPKPSFTVKDIERDVYEIIDSGLENITSVTERVIRGELKTF.

Position 136–141 (136–141 (GTGSTD)) interacts with ATP.

The protein belongs to the AdoMet synthase 2 family. Mg(2+) is required as a cofactor.

The enzyme catalyses L-methionine + ATP + H2O = S-adenosyl-L-methionine + phosphate + diphosphate. It functions in the pathway amino-acid biosynthesis; S-adenosyl-L-methionine biosynthesis; S-adenosyl-L-methionine from L-methionine: step 1/1. Functionally, catalyzes the formation of S-adenosylmethionine from methionine and ATP. In Methanospirillum hungatei JF-1 (strain ATCC 27890 / DSM 864 / NBRC 100397 / JF-1), this protein is S-adenosylmethionine synthase.